The sequence spans 484 residues: Protein nucleotidyltransferase YdiU (484 aa).

ATP contacts are provided by Gly87, Gly89, Arg90, Lys110, Asp122, Gly123, Arg173, and Arg180. The Proton acceptor role is filled by Asp249. 2 residues coordinate Mg(2+): Asn250 and Asp259. Asp259 lines the ATP pocket.

This sequence belongs to the SELO family. Requires Mg(2+) as cofactor. It depends on Mn(2+) as a cofactor.

The enzyme catalyses L-seryl-[protein] + ATP = 3-O-(5'-adenylyl)-L-seryl-[protein] + diphosphate. It catalyses the reaction L-threonyl-[protein] + ATP = 3-O-(5'-adenylyl)-L-threonyl-[protein] + diphosphate. It carries out the reaction L-tyrosyl-[protein] + ATP = O-(5'-adenylyl)-L-tyrosyl-[protein] + diphosphate. The catalysed reaction is L-histidyl-[protein] + UTP = N(tele)-(5'-uridylyl)-L-histidyl-[protein] + diphosphate. The enzyme catalyses L-seryl-[protein] + UTP = O-(5'-uridylyl)-L-seryl-[protein] + diphosphate. It catalyses the reaction L-tyrosyl-[protein] + UTP = O-(5'-uridylyl)-L-tyrosyl-[protein] + diphosphate. Nucleotidyltransferase involved in the post-translational modification of proteins. It can catalyze the addition of adenosine monophosphate (AMP) or uridine monophosphate (UMP) to a protein, resulting in modifications known as AMPylation and UMPylation. This Alcanivorax borkumensis (strain ATCC 700651 / DSM 11573 / NCIMB 13689 / SK2) protein is Protein nucleotidyltransferase YdiU.